Consider the following 1163-residue polypeptide: MTRTRAALLLFTALATSLGFNLDTEELTAFRVDSAGFGDSVVQYANSWVVVGAPQKITAANQTGGLYQCGYSTGACEPIGLQVPPEAVNMSLGLSLASTTSPSQLLACGPTVHHECGRNMYLTGLCFLLGPTQLTQRLPVSRQECPRQEQDIVFLIDGSGSISSRNFATMMNFVRAVISQFQRPSTQFSLMQFSNKFQTHFTFEEFRRSSNPLSLLASVHQLQGFTYTATAIQNVVHRLFHASYGARRDAAKILIVITDGKKEGDSLDYKDVIPMADAAGIIRYAIGVGLAFQNRNSWKELNDIASKPSQEHIFKVEDFDALKDIQNQLKEKIFAIEGTETTSSSSFELEMAQEGFSAVFTPDGPVLGAVGSFTWSGGAFLYPPNMSPTFINMSQENVDMRDSYLGYSTELALWKGVQSLVLGAPRYQHTGKAVIFTQVSRQWRMKAEVTGTQIGSYFGASLCSVDVDSDGSTDLVLIGAPHYYEQTRGGQVSVCPLPRGWRRWWCDAVLYGEQGHPWGRFGAALTVLGDVNGDKLTDVVIGAPGEEENRGAVYLFHGVLGPSISPSHSQRIAGSQLSSRLQYFGQALSGGQDLTQDGLVDLAVGARGQVLLLRTRPVLWVGVSMQFIPAEIPRSAFECREQVVSEQTLVQSNICLYIDKRSKNLLGSRDLQSSVTLDLALDPGRLSPRATFQETKNRSLSRVRVLGLKAHCENFNLLLPSCVEDSVTPITLRLNFTLVGKPLLAFRNLRPMLAADAQRYFTASLPFEKNCGADHICQDNLGISFSFPGLKSLLVGSNLELNAEVMVWNDGEDSYGTTITFSHPAGLSYRYVAEGQKQGQLRSLHLTCDSAPVGSQGTWSTSCRINHLIFRGGAQITFLATFDVSPKAVLGDRLLLTANVSSENNTPRTSKTTFQLELPVKYAVYTVVSSHEQFTKYLNFSESEEKESHVAMHRYQVNNLGQRDLPVSINFWVPVELNQEAVWMDVEVSHPQNPSLRCSSEKIAPPASDFLAHIQKNPVLDCSIAGCLRFRCDVPSFSVQEELDFTLKGNLSFGWVRQILQKKVSVVSVAEITFDTSVYSQLPGQEAFMRAQTTTVLEKYKVHNPTPLIVGSSIGGLLLLALITAVLYKVGFFKRQYKEMMEEANGQIAPENGTQTPSPPSEK.

The first 19 residues, 1–19, serve as a signal peptide directing secretion; sequence MTRTRAALLLFTALATSLG. The Extracellular portion of the chain corresponds to 20–1107; that stretch reads FNLDTEELTA…EKYKVHNPTP (1088 aa). FG-GAP repeat units lie at residues 23 to 78 and 79 to 138; these read DTEE…ACEP and IGLQ…TQRL. N-linked (GlcNAc...) asparagine glycosylation occurs at Asn-61. Cysteines 69 and 76 form a disulfide. N-linked (GlcNAc...) asparagine glycosylation is present at Asn-89. 2 disulfide bridges follow: Cys-108/Cys-126 and Cys-116/Cys-145. Mg(2+) is bound by residues Asp-157, Ser-159, Ser-161, and Asp-259. One can recognise a VWFA domain in the interval 165-339; the sequence is RNFATMMNFV…KEKIFAIEGT (175 aa). FG-GAP repeat units follow at residues 340–391, 392–443, 444–504, 507–565, and 570–630; these read ETTS…PTFI, NMSQ…SRQW, RMKA…WRRW, DAVL…PSIS, and QRIA…FIPA. N-linked (GlcNAc...) asparagine glycosylation is present at Asn-392. Residues Asp-466, Asp-468, Asp-470, and Asp-474 each coordinate Ca(2+). A disulfide bridge links Cys-495 with Cys-506. Ca(2+) contacts are provided by Asp-530, Asn-532, Asp-534, Asp-538, Asp-593, Asp-597, and Asp-601. 2 cysteine pairs are disulfide-bonded: Cys-639/Cys-722 and Cys-655/Cys-712. Asn-697 and Asn-735 each carry an N-linked (GlcNAc...) asparagine glycan. 2 disulfide bridges follow: Cys-771/Cys-777 and Cys-848/Cys-863. 2 N-linked (GlcNAc...) asparagine glycosylation sites follow: Asn-899 and Asn-939. Intrachain disulfides connect Cys-998–Cys-1022 and Cys-1027–Cys-1032. Asn-1050 carries N-linked (GlcNAc...) asparagine glycosylation. Residues 1108-1128 traverse the membrane as a helical segment; the sequence is LIVGSSIGGLLLLALITAVLY. The Cytoplasmic portion of the chain corresponds to 1129–1163; that stretch reads KVGFFKRQYKEMMEEANGQIAPENGTQTPSPPSEK. A GFFKR motif motif is present at residues 1131–1135; the sequence is GFFKR.

It belongs to the integrin alpha chain family. Heterodimer of an alpha and a beta subunit. Alpha-X associates with beta-2. In terms of tissue distribution, predominantly expressed in monocytes and granulocytes.

Its subcellular location is the membrane. In terms of biological role, integrin alpha-X/beta-2 is a receptor for fibrinogen. It recognizes the sequence G-P-R in fibrinogen. It mediates cell-cell interaction during inflammatory responses. It is especially important in monocyte adhesion and chemotaxis. The chain is Integrin alpha-X (ITGAX) from Homo sapiens (Human).